Consider the following 272-residue polypeptide: Formamidopyrimidine-DNA glycosylase (272 aa).

Catalysis depends on P2, which acts as the Schiff-base intermediate with DNA. The Proton donor role is filled by E3. The active-site Proton donor; for beta-elimination activity is K58. DNA-binding residues include H91, R111, and R153. The FPG-type zinc-finger motif lies at 238–272 (AVYGRANKACVICSKPLKEIRQAQRSTVFCINCQS). R262 functions as the Proton donor; for delta-elimination activity in the catalytic mechanism.

It belongs to the FPG family. In terms of assembly, monomer. The cofactor is Zn(2+).

The enzyme catalyses Hydrolysis of DNA containing ring-opened 7-methylguanine residues, releasing 2,6-diamino-4-hydroxy-5-(N-methyl)formamidopyrimidine.. It catalyses the reaction 2'-deoxyribonucleotide-(2'-deoxyribose 5'-phosphate)-2'-deoxyribonucleotide-DNA = a 3'-end 2'-deoxyribonucleotide-(2,3-dehydro-2,3-deoxyribose 5'-phosphate)-DNA + a 5'-end 5'-phospho-2'-deoxyribonucleoside-DNA + H(+). In terms of biological role, involved in base excision repair of DNA damaged by oxidation or by mutagenic agents. Acts as a DNA glycosylase that recognizes and removes damaged bases. Has a preference for oxidized purines, such as 7,8-dihydro-8-oxoguanine (8-oxoG). Has AP (apurinic/apyrimidinic) lyase activity and introduces nicks in the DNA strand. Cleaves the DNA backbone by beta-delta elimination to generate a single-strand break at the site of the removed base with both 3'- and 5'-phosphates. This Marinomonas sp. (strain MWYL1) protein is Formamidopyrimidine-DNA glycosylase.